A 293-amino-acid chain; its full sequence is Ribosomal RNA small subunit methyltransferase H (293 aa).

S-adenosyl-L-methionine-binding positions include 32 to 34 (GGH), Asp51, Phe78, Asp99, and Gln106. The tract at residues 272 to 293 (SDEEIKENPASRSAKLRVGRRI) is disordered.

This sequence belongs to the methyltransferase superfamily. RsmH family.

It localises to the cytoplasm. The enzyme catalyses cytidine(1402) in 16S rRNA + S-adenosyl-L-methionine = N(4)-methylcytidine(1402) in 16S rRNA + S-adenosyl-L-homocysteine + H(+). Specifically methylates the N4 position of cytidine in position 1402 (C1402) of 16S rRNA. The polypeptide is Ribosomal RNA small subunit methyltransferase H (Sulfurihydrogenibium sp. (strain YO3AOP1)).